A 133-amino-acid chain; its full sequence is ATP synthase epsilon chain (133 aa).

Belongs to the ATPase epsilon chain family. F-type ATPases have 2 components, CF(1) - the catalytic core - and CF(0) - the membrane proton channel. CF(1) has five subunits: alpha(3), beta(3), gamma(1), delta(1), epsilon(1). CF(0) has three main subunits: a, b and c.

The protein localises to the cell membrane. In terms of biological role, produces ATP from ADP in the presence of a proton gradient across the membrane. The protein is ATP synthase epsilon chain (atpC) of Alkalihalophilus pseudofirmus (strain ATCC BAA-2126 / JCM 17055 / OF4) (Bacillus pseudofirmus).